We begin with the raw amino-acid sequence, 250 residues long: Capsid protein (250 aa).

Residues 1–31 (MPKRDAPWLMAGTSKVSRSGNYSPSGGMGSK) are disordered. The Bipartite nuclear localization signal motif lies at 3–19 (KRDAPWLMAGTSKVSRS). Residues 14–31 (SKVSRSGNYSPSGGMGSK) are compositionally biased toward polar residues. A Nuclear localization signal motif is present at residues 34–48 (KANAWVNRPMYRKPR). A zinc finger lies at 53-70 (YKSPDVPKGCEGPCKVQS). Positions 95 to 116 (ITHRVGKRFCVKSVYILGKIWM) match the Nuclear export signal motif. Residues 194-241 (RRFWKVNNHVVYNHQEAGKYENHTENALLLYMACTHASNPVYATLKIR) carry the Bipartite nuclear localization signal motif.

The protein belongs to the geminiviridae capsid protein family. As to quaternary structure, homomultimer. Binds to single-stranded and double-stranded viral DNA. Interacts (via nuclear localization signals) with host importin alpha-1a.

Its subcellular location is the virion. The protein localises to the host nucleus. In terms of biological role, encapsidates the viral DNA into characteristic twinned ('geminate') particles. Binds the genomic viral ssDNA and shuttles it into and out of the cell nucleus. The CP of bipartite geminiviruses is not required for cell-to-cell or systemic movement. The protein is Capsid protein of Bean golden yellow mosaic virus (isolate Puerto Rico) (BGYMV).